The chain runs to 185 residues: Monothiol glutaredoxin-S4, mitochondrial (185 aa).

The transit peptide at 1–36 (MARLMSSALIRGLVRSSCSPTVAAVAQPTIHQFRNY) directs the protein to the mitochondrion. The disordered stretch occupies residues 37–74 (SSGLGGDSTATGDSSSTRVAADPDTHQDFQPTTKSSNM). Over residues 43–53 (DSTATGDSSST) the composition is skewed to low complexity. The span at 64 to 74 (DFQPTTKSSNM) shows a compositional bias: polar residues. Residues 77-179 (DDIVSQDIKE…DVLGDIAQKR (103 aa)) form the Glutaredoxin domain. Lys-94 serves as a coordination point for glutathione. [2Fe-2S] cluster is bound at residue Cys-102. Residues Lys-131, Phe-143, and 156-157 (SD) each bind glutathione.

The protein belongs to the glutaredoxin family. CGFS subfamily.

The protein resides in the mitochondrion. Functionally, may only reduce GSH-thiol disulfides, but not protein disulfides. This Oryza sativa subsp. japonica (Rice) protein is Monothiol glutaredoxin-S4, mitochondrial (GRXS4).